The sequence spans 142 residues: Large ribosomal subunit protein uL11 (142 aa).

This sequence belongs to the universal ribosomal protein uL11 family. In terms of assembly, part of the ribosomal stalk of the 50S ribosomal subunit. Interacts with L10 and the large rRNA to form the base of the stalk. L10 forms an elongated spine to which L12 dimers bind in a sequential fashion forming a multimeric L10(L12)X complex. In terms of processing, one or more lysine residues are methylated.

Its function is as follows. Forms part of the ribosomal stalk which helps the ribosome interact with GTP-bound translation factors. This Enterobacter sp. (strain 638) protein is Large ribosomal subunit protein uL11.